The sequence spans 380 residues: MLIVADENIPLIEEFFAGFGEIRRFPGRAIDRATVEQADVLLVRSVTQVDRQLLEGSPVRFVGTCTIGTDHLDLEHFQQAGITWSSAPGCNARGVVDYVLGSLLTLAEIEGVDLAQRCYGVVGAGEVGGRLIEVLRGLGWNVLVCDPQRQAAEGGDYVSLEQLLERCDVISLHTPLTKSGQDSTWHLLDRQRLNRLRHGTWLINAARGPVVDNRALAEVLRQREDLQAVLDVWEEEPTVDASLADLCVLATPHIAGYSLDGKQRGTAQIYQAYCRFLGQAEQVSLSALLPAPWVPQVSLNANADPAWALAMICRAVYDPRRDDADFRRSLSDDVAQQRSAFDGLRKHYPERREIDGLEVRIQGESAALSRIVRALGAREA.

Substrate-binding residues include Ser-45 and Thr-66. NAD(+)-binding residues include Asp-146 and Thr-174. Arg-207 is an active-site residue. Asp-231 is an NAD(+) binding site. Residue Glu-236 is part of the active site. The Proton donor role is filled by His-253. An NAD(+)-binding site is contributed by Gly-256. Tyr-257 is a binding site for substrate.

The protein belongs to the D-isomer specific 2-hydroxyacid dehydrogenase family. PdxB subfamily. As to quaternary structure, homodimer.

It localises to the cytoplasm. The catalysed reaction is 4-phospho-D-erythronate + NAD(+) = (R)-3-hydroxy-2-oxo-4-phosphooxybutanoate + NADH + H(+). It functions in the pathway cofactor biosynthesis; pyridoxine 5'-phosphate biosynthesis; pyridoxine 5'-phosphate from D-erythrose 4-phosphate: step 2/5. Functionally, catalyzes the oxidation of erythronate-4-phosphate to 3-hydroxy-2-oxo-4-phosphonooxybutanoate. The sequence is that of Erythronate-4-phosphate dehydrogenase from Pseudomonas fluorescens (strain ATCC BAA-477 / NRRL B-23932 / Pf-5).